A 181-amino-acid chain; its full sequence is Probable cobalt-precorrin-6B C(15)-methyltransferase (decarboxylating) (181 aa).

Residues threonine 16, 40 to 44, aspartate 61, and alanine 89 each bind S-adenosyl-L-methionine; that span reads GCGSG.

Belongs to the methyltransferase superfamily. Archaeal-type CbiT family.

The enzyme catalyses Co-precorrin-6B + S-adenosyl-L-methionine = Co-precorrin-7 + S-adenosyl-L-homocysteine + CO2. It functions in the pathway cofactor biosynthesis; adenosylcobalamin biosynthesis; cob(II)yrinate a,c-diamide from sirohydrochlorin (anaerobic route): step 8/10. Its function is as follows. Catalyzes the methylation of C-15 in cobalt-precorrin-6B followed by the decarboxylation of C-12 to form cobalt-precorrin-7. The protein is Probable cobalt-precorrin-6B C(15)-methyltransferase (decarboxylating) of Methanococcus maripaludis (strain DSM 14266 / JCM 13030 / NBRC 101832 / S2 / LL).